Reading from the N-terminus, the 1188-residue chain is DNA-directed RNA polymerase subunit beta (1188 aa).

Belongs to the RNA polymerase beta chain family. In terms of assembly, the RNAP catalytic core consists of 2 alpha, 1 beta, 1 beta' and 1 omega subunit. When a sigma factor is associated with the core the holoenzyme is formed, which can initiate transcription.

The catalysed reaction is RNA(n) + a ribonucleoside 5'-triphosphate = RNA(n+1) + diphosphate. Functionally, DNA-dependent RNA polymerase catalyzes the transcription of DNA into RNA using the four ribonucleoside triphosphates as substrates. This is DNA-directed RNA polymerase subunit beta from Streptococcus pyogenes serotype M18 (strain MGAS8232).